The primary structure comprises 247 residues: Small ribosomal subunit protein uS2 (247 aa).

Belongs to the universal ribosomal protein uS2 family.

This is Small ribosomal subunit protein uS2 from Halorhodospira halophila (strain DSM 244 / SL1) (Ectothiorhodospira halophila (strain DSM 244 / SL1)).